A 198-amino-acid chain; its full sequence is Translation machinery-associated protein 22 (198 aa).

Residues 99–170 (VIIKREARTK…EVETYIHSLL (72 aa)) enclose the SUI1 domain.

Belongs to the DENR family. As to quaternary structure, interacts with the 40S ribosomal subunit.

It localises to the cytoplasm. The protein is Translation machinery-associated protein 22 (TMA22) of Saccharomyces cerevisiae (strain YJM789) (Baker's yeast).